The primary structure comprises 326 residues: Metallophosphoesterase domain-containing protein 1 (326 aa).

Belongs to the UPF0046 family.

Its function is as follows. May have metallophosphoesterase activity (in vitro). The sequence is that of Metallophosphoesterase domain-containing protein 1 (Mpped1) from Mus musculus (Mouse).